A 181-amino-acid polypeptide reads, in one-letter code: Transcription termination/antitermination protein NusG (181 aa).

In terms of domain architecture, KOW spans 130–161; that stretch reads PGEMIRVNDGPFADFNGVVEEVDYEKSRLKVS.

The protein belongs to the NusG family. In terms of assembly, monomer. Interacts with the transcription termination factor Rho and with RNA polymerase.

In terms of biological role, participates in transcription elongation, termination and antitermination. In the absence of Rho, increases the rate of transcription elongation by the RNA polymerase (RNAP), probably by partially suppressing pausing. In the presence of Rho, modulates most Rho-dependent termination events by interacting with the RNAP to render the complex more susceptible to the termination activity of Rho. May be required to overcome a kinetic limitation of Rho to function at certain terminators. Also involved in ribosomal RNA transcriptional antitermination. This chain is Transcription termination/antitermination protein NusG, found in Buchnera aphidicola subsp. Acyrthosiphon pisum (strain APS) (Acyrthosiphon pisum symbiotic bacterium).